Reading from the N-terminus, the 449-residue chain is Protein CapK (449 aa).

It functions in the pathway capsule biogenesis; capsule polysaccharide biosynthesis. Its function is as follows. Required for the biosynthesis of type 1 capsular polysaccharide. The polypeptide is Protein CapK (capK) (Staphylococcus aureus).